Reading from the N-terminus, the 748-residue chain is tRNA endonuclease ANKZF1 (748 aa).

The C2H2-type zinc finger occupies 96–120; the sequence is LFCSACDQIFQNHQEQREHYKLDWH. The segment at 135-185 is disordered; that stretch reads SASDFEQQSSTGDLSSISGSDDTDSSSEEDLLPLDEGRAESEKPNRPPGFY. Residues 143–154 show a composition bias toward low complexity; the sequence is SSTGDLSSISGS. Positions 155-167 are enriched in acidic residues; that stretch reads DDTDSSSEEDLLP. The segment covering 169-179 has biased composition (basic and acidic residues); that stretch reads DEGRAESEKPN. The VLRF1 domain occupies 227–370; the sequence is GPRYYVVLMA…QRVLHKLTTL (144 aa). The active site involves Q270. S282 and S385 each carry phosphoserine. A compositionally biased stretch (basic and acidic residues) spans 383 to 408; sequence FHSPETHWKPVREERKKDTEKEKTKV. Disordered regions lie at residues 383–438 and 460–497; these read FHSP…SEVE and RRRRRKKKERSQEQQCGAHGPLPQQPQDEPFSQPTQEV. Over residues 429 to 438 the composition is skewed to acidic residues; the sequence is SQEEDGSEVE. The segment covering 484-497 has biased composition (polar residues); that stretch reads QPQDEPFSQPTQEV. The stretch at 515-545 is one ANK 1 repeat; that stretch reads ELWDTLLAACRAGEVEVLKLQLATGLVDPGV. Phosphoserine is present on S555. The ANK 2 repeat unit spans residues 556-585; it reads GGFTLLHAAAAAGRGLVVRLLLEAGADPTV. The disordered stretch occupies residues 621–677; it reads KARVPGPLTQEMEARQATRKKEQKAARRQREQQQRKQREQEEQEQEEQRRFAALSDR. A coiled-coil region spans residues 628–681; sequence LTQEMEARQATRKKEQKAARRQREQQQRKQREQEEQEQEEQRRFAALSDREKRA. Position 629 is a phosphothreonine (T629). Positions 632–677 are enriched in basic and acidic residues; that stretch reads MEARQATRKKEQKAARRQREQQQRKQREQEEQEQEEQRRFAALSDR. A VCP/p97-interacting motif (VIM) region spans residues 654 to 666; sequence QRKQREQEEQEQE. S702 carries the post-translational modification Phosphoserine.

Belongs to the ANKZF1/VMS1 family. In terms of assembly, interacts (via VIM motif) with VCP.

Its subcellular location is the cytoplasm. Endonuclease that cleaves polypeptidyl-tRNAs downstream of the ribosome-associated quality control (RQC) pathway to release incompletely synthesized polypeptides for degradation. The RQC pathway disassembles aberrantly stalled translation complexes to recycle or degrade the constituent parts. ANKZF1 acts downstream disassembly of stalled ribosomes and specifically cleaves off the terminal 3'-CCA nucleotides universal to all tRNAs from polypeptidyl-tRNAs, releasing (1) ubiquitinated polypeptides from 60S ribosomal subunit for degradation and (2) cleaved tRNAs. ANKZF1-cleaved tRNAs are then repaired and recycled by ELAC1 and TRNT1. Also plays a role in the cellular response to hydrogen peroxide and in the maintenance of mitochondrial integrity under conditions of cellular stress. The polypeptide is tRNA endonuclease ANKZF1 (Mus musculus (Mouse)).